Reading from the N-terminus, the 434-residue chain is GTPase Obg (434 aa).

The Obg domain maps to 4 to 162; that stretch reads ADFIDRIVIY…RKLVLELKLL (159 aa). One can recognise an OBG-type G domain in the interval 163–333; sequence ADVGLVGYPN…IVYKLAEIVK (171 aa). GTP contacts are provided by residues 169–176, 194–198, 215–218, 285–288, and 314–316; these read GYPNVGKS, FTTTI, DIPG, NKID, and SII. Mg(2+) is bound by residues serine 176 and threonine 196. Positions 355–434 constitute an OCT domain; the sequence is LWKELPERFN…VAQRAFEYKE (80 aa).

Belongs to the TRAFAC class OBG-HflX-like GTPase superfamily. OBG GTPase family. In terms of assembly, monomer. Mg(2+) serves as cofactor.

It is found in the cytoplasm. An essential GTPase which binds GTP, GDP and possibly (p)ppGpp with moderate affinity, with high nucleotide exchange rates and a fairly low GTP hydrolysis rate. Plays a role in control of the cell cycle, stress response, ribosome biogenesis and in those bacteria that undergo differentiation, in morphogenesis control. This is GTPase Obg from Thermosipho africanus (strain TCF52B).